The primary structure comprises 469 residues: Ribosomal protein uS12 methylthiotransferase RimO (469 aa).

The 115-residue stretch at 1–115 folds into the MTTase N-terminal domain; sequence MKFHIITLGC…IGSVVAGGVA (115 aa). Cys10, Cys46, Cys78, Cys180, Cys184, and Cys187 together coordinate [4Fe-4S] cluster. The 233-residue stretch at 166–398 folds into the Radical SAM core domain; that stretch reads NKRGPSAYLK…MAVQQVISRA (233 aa). The TRAM domain occupies 401–469; that stretch reads ARFVGQTMKV…TDYDLWGEIV (69 aa).

This sequence belongs to the methylthiotransferase family. RimO subfamily. [4Fe-4S] cluster is required as a cofactor.

The protein localises to the cytoplasm. The enzyme catalyses L-aspartate(89)-[ribosomal protein uS12]-hydrogen + (sulfur carrier)-SH + AH2 + 2 S-adenosyl-L-methionine = 3-methylsulfanyl-L-aspartate(89)-[ribosomal protein uS12]-hydrogen + (sulfur carrier)-H + 5'-deoxyadenosine + L-methionine + A + S-adenosyl-L-homocysteine + 2 H(+). Its function is as follows. Catalyzes the methylthiolation of an aspartic acid residue of ribosomal protein uS12. The sequence is that of Ribosomal protein uS12 methylthiotransferase RimO from Herpetosiphon aurantiacus (strain ATCC 23779 / DSM 785 / 114-95).